A 355-amino-acid chain; its full sequence is Putative L-lysine 2,3-aminomutase (355 aa).

Residues 93–308 (VHQYANRVLM…KERLSGLSLP (216 aa)) form the Radical SAM core domain. [4Fe-4S] cluster is bound by residues Cys108, Cys112, and Cys115. Position 320 is an N6-(pyridoxal phosphate)lysine (Lys320).

It belongs to the radical SAM superfamily. KamA family. Requires [4Fe-4S] cluster as cofactor. The cofactor is pyridoxal 5'-phosphate.

The protein is Putative L-lysine 2,3-aminomutase of Treponema pallidum (strain Nichols).